We begin with the raw amino-acid sequence, 2225 residues long: MAALVLEDGSVLRGQPFGAAVSTAGEVVFQTGMVGYPEALTDPSYKAQILVLTYPLIGNYGIPPDEMDEFGLCKWFESSGIHVAALVVGECCPTPSHWSATRTLHEWLQQHGIPGLQGVDTRELTKKLREQGSLLGKLVQNGTEPSSLPFLDPNARPLVPEVSIKTPRVFNTGGAPRILALDCGLKYNQIRCLCQRGAEVTVVPWDHALDSQEYEGLFLSNGPGDPASYPSVVSTLSRVLSEPNPRPVFGICLGHQLLALAIGAKTYKMRYGNRGHNQPCLLVGSGRCFLTSQNHGFAVETDSLPADWAPLFTNANDGSNEGIVHNSLPFFSVQFHPEHQAGPSDMELLFDIFLETVKEATAGNPGGQTVRERLTERLCPPGIPTPGSGLPPPRKVLILGSGGLSIGQAGEFDYSGSQAIKALKEENIQTLLINPNIATVQTSQGLADKVYFLPITPHYVTQVIRNERPDGVLLTFGGQTALNCGVELTKAGVLARYGVRVLGTPVETIELTEDRRAFAARMAEIGEHVAPSEAANSLEQAQAAAERLGYPVLVRAAFALGGLGSGFASNREELSALVAPAFAHTSQVLVDKSLKGWKEIEYEVVRDAYGNCVTVCNMENLDPLGIHTGESIVVAPSQTLNDREYQLLRQTAIKVTQHLGIVGECNVQYALNPESEQYYIIEVNARLSRSSALASKATGYPLAYVAAKLALGIPLPELRNSVTGGTAAFEPSVDYCVVKIPRWDLSKFLRVSTKIGSCMKSVGEVMGIGRSFEEAFQKALRMVDENCVGFDHTVKPVSDMELETPTDKRIFVVAAALWAGYSVDRLYELTRIDRWFLHRMKRIIAHAQLLEQHRGQPLPPDLLQQAKCLGFSDKQIALAVLSTELAVRKLRQELGICPAVKQIDTVAAEWPAQTNYLYLTYWGTTHDLTFRTPHVLVLGSGVYRIGSSVEFDWCAVGCIQQLRKMGYKTIMVNYNPETVSTDYDMCDRLYFDEISFEVVMDIYELENPEGVILSMGGQLPNNMAMALHRQQCRVLGTSPEAIDSAENRFKFSRLLDTIGISQPQWRELSDLESARQFCQTVGYPCVVRPSYVLSGAAMNVAYTDGDLERFLSSAAAVSKEHPVVISKFIQEAKEIDVDAVASDGVVAAIAISEHVENAGVHSGDATLVTPPQDITAKTLERIKAIVHAVGQELQVTGPFNLQLIAKDDQLKVIECNVRVSRSFPFVSKTLGVDLVALATRVIMGEEVEPVGLMTGSGVVGVKVPQFSFSRLAGADVVLGVEMTSTGEVAGFGESRCEAYLKAMLSTGFKIPKKNILLTIGSYKNKSELLPTVRLLESLGYSLYASLGTADFYTEHGVKVTAVDWHFEEAVDGECPPQRSILEQLAEKNFELVINLSMRGAGGRRLSSFVTKGYRTRRLAADFSVPLIIDIKCTKLFVEALGQIGPAPPLKVHVDCMTSQKLVRLPGLIDVHVHLREPGGTHKEDFASGTAAALAGGITMVCAMPNTRPPIIDAPALALAQKLAEAGARCDFALFLGASSENAGTLGTVAGSAAGLKLYLNETFSELRLDSVVQWMEHFETWPSHLPIVAHAEQQTVAAVLMVAQLTQRSVHICHVARKEEILLIKAAKARGLPVTCEVAPHHLFLSHDDLERLGPGKGEVRPELGSRQDVEALWENMAVIDCFASDHAPHTLEEKCGSRPPPGFPGLETMLPLLLTAVSEGRLSLDDLLQRLHHNPRRIFHLPPQEDTYVEVDLEHEWTIPSHMPFSKAHWTPFEGQKVKGTVRRVVLRGEVAYIDGQVLVPPGYGQDVRKWPQGAVPQLPPSAPATSEMTTTPERPRRGIPGLPDGRFHLPPRIHRASDPGLPAEEPKEKSSRKVAEPELMGTPDGTCYPPPPVPRQASPQNLGTPGLLHPQTSPLLHSLVGQHILSVQQFTKDQMSHLFNVAHTLRMMVQKERSLDILKGKVMASMFYEVSTRTSSSFAAAMARLGGAVLSFSEATSSVQKGESLADSVQTMSCYADVVVLRHPQPGAVELAAKHCRRPVINAGDGVGEHPTQALLDIFTIREELGTVNGMTITMVGDLKHGRTVHSLACLLTQYRVSLRYVAPPSLRMPPTVRAFVASRGTKQEEFESIEEALPDTDVLYMTRIQKERFGSTQEYEACFGQFILTPHIMTRAKKKMVVMHPMPRVNEISVEVDSDPRAAYFRQAENGMYIRMALLATVLGRF.

An N-acetylalanine modification is found at A2. Residues 2–365 (AALVLEDGSV…TVKEATAGNP (364 aa)) are GATase (Glutamine amidotransferase). L-glutamine is bound by residues S44, G222, and G224. Residues 177-363 (RILALDCGLK…LETVKEATAG (187 aa)) enclose the Glutamine amidotransferase type-1 domain. Residue C252 is the Nucleophile; for GATase activity of the active site. Residues L253, Q256, N294, G296, and F297 each contribute to the L-glutamine site. Residues H336 and E338 each act as for GATase activity in the active site. Residues 366–394 (GGQTVRERLTERLCPPGIPTPGSGLPPPR) form a linker region. Residues 395 to 933 (KVLILGSGGL…TTHDLTFRTP (539 aa)) are CPSase A. The interval 395-1455 (KVLILGSGGL…APPLKVHVDC (1061 aa)) is CPSase (Carbamoyl phosphate synthase). T456 bears the Phosphothreonine; by MAPK1 mark. Residues R515, R555, G561, G562, K592, E599, G625, I626, H627, Q668, and E682 each contribute to the ATP site. In terms of domain architecture, ATP-grasp 1 spans 519-711 (AARMAEIGEH…LAYVAAKLAL (193 aa)). Mg(2+) is bound by residues Q668, E682, and N684. 3 residues coordinate Mn(2+): Q668, E682, and N684. N6-acetyllysine is present on K747. The interval 934–1455 (HVLVLGSGVY…APPLKVHVDC (522 aa)) is CPSase B. S1038 carries the phosphoserine modification. The 192-residue stretch at 1052-1243 (SRLLDTIGIS…LVALATRVIM (192 aa)) folds into the ATP-grasp 2 domain. ATP is bound by residues R1088, K1127, I1129, E1134, G1159, V1160, H1161, S1162, Q1202, and E1214. The Mg(2+) site is built by Q1202, E1214, and N1216. Residues Q1202, E1214, and N1216 each coordinate Mn(2+). The 155-residue stretch at 1308–1462 (FKIPKKNILL…VDCMTSQKLV (155 aa)) folds into the MGS-like domain. Phosphoserine; by PKA is present on S1406. Position 1411 is an N6-acetyllysine (K1411). The segment at 1456 to 1788 (MTSQKLVRLP…VKGTVRRVVL (333 aa)) is DHOase (dihydroorotase). Positions 1471 and 1473 each coordinate Zn(2+). R1475 and N1505 together coordinate (S)-dihydroorotate. Zn(2+) contacts are provided by K1556, H1590, C1613, H1614, and E1637. K1556 carries the post-translational modification N6-carboxylysine. Residue R1661 coordinates (S)-dihydroorotate. D1686 contacts Zn(2+). D1686 serves as the catalytic For DHOase activity. Residues H1690 and P1702 each contribute to the (S)-dihydroorotate site. Positions 1789–1917 (RGEVAYIDGQ…GLLHPQTSPL (129 aa)) are linker. The tract at residues 1811–1899 (KWPQGAVPQL…YPPPPVPRQA (89 aa)) is disordered. Over residues 1825-1834 (PATSEMTTTP) the composition is skewed to polar residues. At S1859 the chain carries Phosphoserine; by RPS6KB1 and PKA. The segment covering 1866-1878 (EEPKEKSSRKVAE) has biased composition (basic and acidic residues). At S1873 the chain carries Phosphoserine; by PKC; in vitro. T1884 carries the post-translational modification Phosphothreonine. S1900 and S1938 each carry phosphoserine. Positions 1918 to 2225 (LHSLVGQHIL…ALLATVLGRF (308 aa)) are ATCase (Aspartate transcarbamylase). Residues R1975 and T1976 each coordinate carbamoyl phosphate. K2003 lines the L-aspartate pocket. R2024, H2052, and Q2055 together coordinate carbamoyl phosphate. The L-aspartate site is built by R2085 and R2146. Positions 2185 and 2186 each coordinate carbamoyl phosphate.

It in the N-terminal section; belongs to the CarA family. The protein in the 2nd section; belongs to the CarB family. This sequence in the 3rd section; belongs to the metallo-dependent hydrolases superfamily. DHOase family. CAD subfamily. In the C-terminal section; belongs to the aspartate/ornithine carbamoyltransferase superfamily. ATCase family. In terms of assembly, homohexamer. Interacts with CIPC. Zn(2+) serves as cofactor. Mg(2+) is required as a cofactor. It depends on Mn(2+) as a cofactor. Post-translationally, activated by MAP kinase (Erk1/2) phosphorylation just prior to the S phase of the cell cycle, when the demand for pyrimidine nucleotides is greatest, and down-regulated as the cells emerge from S phase by protein kinase A (PKA) phosphorylation. Phosphorylation at Ser-1859 by RPS6KB1 downstream of MTOR promotes oligomerization and stimulates dihydroorotase activity. Phosphorylation at Ser-1406 reduces sensitivity to feedback inhibition by UTP.

It is found in the cytoplasm. The protein resides in the nucleus. The enzyme catalyses hydrogencarbonate + L-glutamine + 2 ATP + H2O = carbamoyl phosphate + L-glutamate + 2 ADP + phosphate + 2 H(+). The catalysed reaction is L-glutamine + H2O = L-glutamate + NH4(+). It carries out the reaction hydrogencarbonate + NH4(+) + 2 ATP = carbamoyl phosphate + 2 ADP + phosphate + 2 H(+). It catalyses the reaction carbamoyl phosphate + L-aspartate = N-carbamoyl-L-aspartate + phosphate + H(+). The enzyme catalyses (S)-dihydroorotate + H2O = N-carbamoyl-L-aspartate + H(+). It participates in pyrimidine metabolism; UMP biosynthesis via de novo pathway; (S)-dihydroorotate from bicarbonate: step 1/3. It functions in the pathway pyrimidine metabolism; UMP biosynthesis via de novo pathway; (S)-dihydroorotate from bicarbonate: step 2/3. Its pathway is pyrimidine metabolism; UMP biosynthesis via de novo pathway; (S)-dihydroorotate from bicarbonate: step 3/3. Allosterically regulated and controlled by phosphorylation. 5-phosphoribose 1-diphosphate (PRPP) is an activator while UMP and UTP are inhibitors of the CPSase reaction. Multifunctional protein that encodes the first 3 enzymatic activities of the de novo pyrimidine pathway: carbamoylphosphate synthetase (CPSase; EC 6.3.5.5), aspartate transcarbamylase (ATCase; EC 2.1.3.2) and dihydroorotase (DHOase; EC 3.5.2.3). The CPSase-function is accomplished in 2 steps, by a glutamine-dependent amidotransferase activity (GATase) that binds and cleaves glutamine to produce ammonia, followed by an ammonium-dependent carbamoyl phosphate synthetase, which reacts with the ammonia, hydrogencarbonate and ATP to form carbamoyl phosphate. The endogenously produced carbamoyl phosphate is sequestered and channeled to the ATCase active site. ATCase then catalyzes the formation of carbamoyl-L-aspartate from L-aspartate and carbamoyl phosphate. In the last step, DHOase catalyzes the cyclization of carbamoyl aspartate to dihydroorotate. This Homo sapiens (Human) protein is Multifunctional protein CAD.